A 189-amino-acid chain; its full sequence is GTPase NRas (189 aa).

GTP contacts are provided by residues 10–18 and 29–30; these read GAGGVGKSA and VD. The Effector region motif lies at 32–40; it reads YDPTIEDSY. Position 57–61 (57–61) interacts with GTP; the sequence is DTAGQ. A Phosphoserine modification is found at S89. Residue 116 to 119 participates in GTP binding; sequence NKCD. The interval 166-185 is hypervariable region; that stretch reads YRMKKLNSNDDGTQGCMGLP. Residue K170 forms a Glycyl lysine isopeptide (Lys-Gly) (interchain with G-Cter in ubiquitin) linkage. The S-palmitoyl cysteine moiety is linked to residue C181. The S-farnesyl cysteine moiety is linked to residue C186. The propeptide at 187–189 is removed in mature form; it reads VVM.

The protein belongs to the small GTPase superfamily. Ras family. Interacts (active GTP-bound form preferentially) with RGS14. Interacts (active GTP-bound form) with RASSF7. Interacts (active GTP-bound form) with both SHOC2 and PP1c (all isoforms) to form a tertiary complex; SHOC2 and PP1c preferably bind M-Ras/MRAS, but they also bind K-Ras/KRAS, N-Ras/NRAS and H-Ras/HRAS. In terms of processing, palmitoylated by the ZDHHC9-GOLGA7 complex. Depalmitoylated by ABHD17A, ABHD17B and ABHD17C. A continuous cycle of de- and re-palmitoylation regulates rapid exchange between plasma membrane and Golgi. Acetylation at Lys-104 prevents interaction with guanine nucleotide exchange factors (GEFs). Post-translationally, ubiquitinated by the BCR(LZTR1) E3 ubiquitin ligase complex at Lys-170 in a non-degradative manner, leading to inhibit Ras signaling by decreasing Ras association with membranes. In terms of processing, phosphorylation at Ser-89 enhances NRAS association with its downstream effectors.

It localises to the cell membrane. It is found in the golgi apparatus membrane. It catalyses the reaction GTP + H2O = GDP + phosphate + H(+). Its activity is regulated as follows. Alternates between an inactive form bound to GDP and an active form bound to GTP. Activated by a guanine nucleotide-exchange factor (GEF) and inactivated by a GTPase-activating protein (GAP). In terms of biological role, ras proteins bind GDP/GTP and possess intrinsic GTPase activity. The chain is GTPase NRas (NRAS) from Cavia porcellus (Guinea pig).